The primary structure comprises 401 residues: Short chain dehydrogenase/reductase dpchH (401 aa).

Asn16 is a glycosylation site (N-linked (GlcNAc...) asparagine). A helical transmembrane segment spans residues 51 to 71; it reads VRAVDVLFGTFLYVPLGILFL. NAD(+)-binding positions include 72 to 80, 99 to 100, and 118 to 120; these read KKSLSGFGD, TG, and AKV. N-linked (GlcNAc...) asparagine glycosylation occurs at Asn242. Tyr275 serves as the catalytic Proton acceptor. NAD(+) contacts are provided by residues 275-279 and 308-310; these read YGTSK and GTI. N-linked (GlcNAc...) asparagine glycosylation is present at Asn386.

Its subcellular location is the membrane. It functions in the pathway secondary metabolite biosynthesis; terpenoid biosynthesis. Its function is as follows. Short chain dehydrogenase/reductase; part of the gene cluster that mediates the biosynthesis of the diterpenoid pyrones higginsianins A and B. The first step of the pathway is the synthesis of the alpha-pyrone moiety by the polyketide synthase dpchA via condensation of one acetyl-CoA starter unit with 3 malonyl-CoA units and 2 methylations. The alpha-pyrone is then combined with geranylgeranyl pyrophosphate (GGPP) formed by the GGPP synthase dpchD through the action of the prenyltransferase dpchC to yield a linear alpha-pyrone diterpenoid. Subsequent steps in the diterpenoid pyrone biosynthetic pathway involve the decalin core formation, which is initiated by the epoxidation of the C10-C11 olefin by the FAD-dependent oxidoreductase dpchE, and is followed by a cyclization cascade catalyzed by the terpene cyclase dpchB. The short chain dehydrogenase/reductase dpchG then oxidizes the 8S hydroxy group to a ketone and the short chain dehydrogenase/reductase dpchH reduces the ketone to the 8R hydroxy group to yield higginsianin B. Finally, the FAD-dependent oxidoreductase dpchF converts higginsianin B into higginsianin A. This Colletotrichum higginsianum (strain IMI 349063) (Crucifer anthracnose fungus) protein is Short chain dehydrogenase/reductase dpchH.